A 437-amino-acid chain; its full sequence is Adenosylhomocysteinase (437 aa).

The substrate site is built by Thr-54, Asp-130, and Glu-155. 156 to 158 (TTT) serves as a coordination point for NAD(+). Residues Lys-185 and Asp-189 each contribute to the substrate site. Residues Asn-190, 219-224 (GYGDVG), Glu-242, Asn-277, 298-300 (IGH), and Asn-345 each bind NAD(+).

The protein belongs to the adenosylhomocysteinase family. As to quaternary structure, homotetramer. The cofactor is NAD(+).

The protein localises to the cytoplasm. The enzyme catalyses S-adenosyl-L-homocysteine + H2O = L-homocysteine + adenosine. It functions in the pathway amino-acid biosynthesis; L-homocysteine biosynthesis; L-homocysteine from S-adenosyl-L-homocysteine: step 1/1. In terms of biological role, adenosylhomocysteine is a competitive inhibitor of S-adenosyl-L-methionine-dependent methyl transferase reactions; therefore adenosylhomocysteinase may play a key role in the control of methylations via regulation of the intracellular concentration of adenosylhomocysteine. This Leishmania donovani protein is Adenosylhomocysteinase.